Here is a 1163-residue protein sequence, read N- to C-terminus: Guanylate cyclase 32E (1163 aa).

Positions 1–25 are cleaved as a signal peptide; the sequence is MPGPCASAAAFSCILVLLLLGCQRS. Residues 29-469 are Extracellular-facing; that stretch reads AAGATVSSMR…LCPRKKLDWR (441 aa). Residues asparagine 147, asparagine 206, asparagine 368, and asparagine 390 are each glycosylated (N-linked (GlcNAc...) asparagine). Residues 470–490 form a helical membrane-spanning segment; that stretch reads YLVSGPLCALVVVVAIALLIK. Topologically, residues 491 to 1163 are cytoplasmic; that stretch reads HYRYEQTLAG…RSAPSITFRL (673 aa). Residues 507-800 form the Protein kinase domain; sequence MKDVTVINLG…IRLVRMHLKE (294 aa). Residues 873-1003 enclose the Guanylate cyclase domain; that stretch reads TILFSDIVGF…DTVNTASRME (131 aa).

It belongs to the adenylyl cyclase class-4/guanylyl cyclase family.

It is found in the membrane. The catalysed reaction is GTP = 3',5'-cyclic GMP + diphosphate. The chain is Guanylate cyclase 32E (Gyc32E) from Drosophila melanogaster (Fruit fly).